Reading from the N-terminus, the 768-residue chain is MPYTLEDLKAHGLSPAEYQQIQQQLGRDPNPNELAMFGVMWSEHCCYKNSRPLLKNFPTTGERVVVGPGENAGVVDLGEGDWLAFKIESHNHPSAVEPFQGAATGVGGILRDIFTLGARPIALLNSLRFGPLTDPRNRRLMARVVEGIAHYGNCVGVPTVGGEVAVDPCYSGNPLVNVMALGLLETPAVVKSAARGVGNPVLYVGATTGRDGIRGASFASAELKEDAQQDRPAVQVGDPFLGKCLIEACLEAFATGAVVAAQDMGAAGITCSTAEMAAKGGVGIRFDLDRVPARESGMAAWEYLLSESQERMLLVVQKGREAEVMEIFHRWGLQASVAGEVIAEPLVEIWHQGSCVVQVPVRALAEDTPVYVRPVLPEPPAYVQAAWQWDPATLPPCDCQGIHLAQATLAWKEVLLQLLASPTLASKAWIYRQYDHQVQNNTVLWPGQGDAAVIRIRSQRFGVGEVPPLRASRKAIAATLDGNGRWVYLDPYEGAKAAVAEAARNLTCVGADPLAVTDNLNFGNPENPVVYWQLALACRGIGDACRALGTPVTGGNVSLYNETLTPQGSQAIYPTPVIGMVGLIPDLKCICGQGWQQEGDLIYLLGSQALTSLGGSEYLAVIHQQVTGRPAPVDLELEKRVQAACRHGIRQGWVRSAHDCSEGGLAVALAEACLSGGRGATLSLAPGSLRWDQALFGEGSSRILVSVDPAQRSAWEAYLEAQLAGQWQLLGEVGSPADPLLLRTAEEDPLLVVSLAAMQAAYHGAFSD.

The active site involves H44. Y47 and K86 together coordinate ATP. E88 provides a ligand contact to Mg(2+). Residues 89–92 (SHNH) and R111 contribute to the substrate site. The active-site Proton acceptor is H90. D112 is a Mg(2+) binding site. Position 235 (Q235) interacts with substrate. D263 contributes to the Mg(2+) binding site. Position 307-309 (307-309 (ESQ)) interacts with substrate. ATP is bound by residues D518 and G555. N556 lines the Mg(2+) pocket. Position 558 (S558) interacts with substrate.

It belongs to the FGAMS family. As to quaternary structure, monomer. Part of the FGAM synthase complex composed of 1 PurL, 1 PurQ and 2 PurS subunits.

Its subcellular location is the cytoplasm. It carries out the reaction N(2)-formyl-N(1)-(5-phospho-beta-D-ribosyl)glycinamide + L-glutamine + ATP + H2O = 2-formamido-N(1)-(5-O-phospho-beta-D-ribosyl)acetamidine + L-glutamate + ADP + phosphate + H(+). It participates in purine metabolism; IMP biosynthesis via de novo pathway; 5-amino-1-(5-phospho-D-ribosyl)imidazole from N(2)-formyl-N(1)-(5-phospho-D-ribosyl)glycinamide: step 1/2. Its function is as follows. Part of the phosphoribosylformylglycinamidine synthase complex involved in the purines biosynthetic pathway. Catalyzes the ATP-dependent conversion of formylglycinamide ribonucleotide (FGAR) and glutamine to yield formylglycinamidine ribonucleotide (FGAM) and glutamate. The FGAM synthase complex is composed of three subunits. PurQ produces an ammonia molecule by converting glutamine to glutamate. PurL transfers the ammonia molecule to FGAR to form FGAM in an ATP-dependent manner. PurS interacts with PurQ and PurL and is thought to assist in the transfer of the ammonia molecule from PurQ to PurL. This is Phosphoribosylformylglycinamidine synthase subunit PurL from Synechococcus sp. (strain JA-2-3B'a(2-13)) (Cyanobacteria bacterium Yellowstone B-Prime).